Consider the following 173-residue polypeptide: Crossover junction endodeoxyribonuclease RuvC (173 aa).

Active-site residues include D8, E67, and D139. D8, E67, and D139 together coordinate Mg(2+).

This sequence belongs to the RuvC family. As to quaternary structure, homodimer which binds Holliday junction (HJ) DNA. The HJ becomes 2-fold symmetrical on binding to RuvC with unstacked arms; it has a different conformation from HJ DNA in complex with RuvA. In the full resolvosome a probable DNA-RuvA(4)-RuvB(12)-RuvC(2) complex forms which resolves the HJ. The cofactor is Mg(2+).

The protein resides in the cytoplasm. The catalysed reaction is Endonucleolytic cleavage at a junction such as a reciprocal single-stranded crossover between two homologous DNA duplexes (Holliday junction).. In terms of biological role, the RuvA-RuvB-RuvC complex processes Holliday junction (HJ) DNA during genetic recombination and DNA repair. Endonuclease that resolves HJ intermediates. Cleaves cruciform DNA by making single-stranded nicks across the HJ at symmetrical positions within the homologous arms, yielding a 5'-phosphate and a 3'-hydroxyl group; requires a central core of homology in the junction. The consensus cleavage sequence is 5'-(A/T)TT(C/G)-3'. Cleavage occurs on the 3'-side of the TT dinucleotide at the point of strand exchange. HJ branch migration catalyzed by RuvA-RuvB allows RuvC to scan DNA until it finds its consensus sequence, where it cleaves and resolves the cruciform DNA. This chain is Crossover junction endodeoxyribonuclease RuvC, found in Citrobacter koseri (strain ATCC BAA-895 / CDC 4225-83 / SGSC4696).